Here is a 449-residue protein sequence, read N- to C-terminus: Immunoglobulin gamma-1 heavy chain (449 aa).

Glutamine 1 is modified (pyrrolidone carboxylic acid). Ig-like domains follow at residues 1 to 96 (QVQL…VYYC), 125 to 218 (PSVF…KKVE), 240 to 339 (PSVF…KTIS), and 348 to 444 (PQVY…KSLS). Residues 1-119 (QVQLVQSGGG…GQGTLVTVSS (119 aa)) are variable (V) domain, involved in antigen recognition. 4 cysteine pairs are disulfide-bonded: cysteine 22–cysteine 96, cysteine 146–cysteine 202, cysteine 263–cysteine 323, and cysteine 369–cysteine 427. The N-linked (GlcNAc...) asparagine glycan is linked to asparagine 73. The tract at residues 120–449 (ASTKGPSVFP…QKSLSLSPGK (330 aa)) is constant (C) domain. Asparagine 299 carries N-linked (GlcNAc...) (complex) asparagine glycosylation.

In terms of assembly, immunoglobulins are composed of two identical heavy chains and two identical light chains; disulfide-linked.

The protein localises to the secreted. Its subcellular location is the cell membrane. Functionally, immunoglobulins, also known as antibodies, are membrane-bound or secreted glycoproteins produced by B lymphocytes. In the recognition phase of humoral immunity, the membrane-bound immunoglobulins serve as receptors which, upon binding of a specific antigen, trigger the clonal expansion and differentiation of B lymphocytes into immunoglobulins-secreting plasma cells. Secreted immunoglobulins mediate the effector phase of humoral immunity, which results in the elimination of bound antigens. The antigen binding site is formed by the variable domain of one heavy chain, together with that of its associated light chain. Thus, each immunoglobulin has two antigen binding sites with remarkable affinity for a particular antigen. The variable domains are assembled by a process called V-(D)-J rearrangement and can then be subjected to somatic hypermutations which, after exposure to antigen and selection, allow affinity maturation for a particular antigen. In Homo sapiens (Human), this protein is Immunoglobulin gamma-1 heavy chain.